Here is a 448-residue protein sequence, read N- to C-terminus: Putative sodium-coupled neutral amino acid transporter 11 (448 aa).

The interval 1-20 is disordered; the sequence is MESERSCLLSSHDAGKGGSS. 11 helical membrane passes run 22–42, 52–72, 94–114, 143–163, 165–185, 200–220, 246–266, 286–306, 324–344, 346–366, and 389–409; these read VSSA…IGLP, MGLL…ILLV, IGYI…MISY, FVIA…RDIA, LGKV…TVVV, AWVF…FALI, ISVG…YATF, TFGR…ECFV, SSHV…SLSY, CLGI…MFIF, and MILV…ALFP. Residues Asn-425, Asn-440, and Asn-444 are each glycosylated (N-linked (GlcNAc...) asparagine).

It belongs to the amino acid/polyamine transporter 2 family.

It localises to the membrane. In terms of biological role, putative sodium-dependent amino acid/proton antiporter. This is Putative sodium-coupled neutral amino acid transporter 11 (slc38a11) from Danio rerio (Zebrafish).